A 420-amino-acid polypeptide reads, in one-letter code: MEWADKYRPKRIEDLIVSEEIRQKIQSWIDAWEEGSPKKRALILYGVQGSGKTSAAYAIAGTFGLPVVEMNASEQRNRESMKATALMASLYADLGASDFRKPSKVILIDEADNIFESNNPKRGGDTGGVYELSKIVKETRNPVIITMNDFYEFRKKNYSSEVINNSESIEFKPYARRLDRNYNEFKKNVRNRIKWIINQEGFSLPDDIINSIIDKNAPDIRSIINDVEAAAVSQSSISQNNDRDTVESVYYLVDKAFKKNYDDTLKSIYGSDVDSDYFINWVEENLPSKTDDISDLNSAYEQLSFADHILWAIERKRHFDLMTFPMEIAGGLAYYIENPKHEYVKFHSPSYINSMSRSKERRHALNAVSLKIGLLLHMSGVESLNYVWFYRLMFKVNAGFRDTVYERLNLTQGEEAVLES.

46-53 (GVQGSGKT) is an ATP binding site.

This sequence belongs to the activator 1 small subunits family. RfcL subfamily. As to quaternary structure, heteromultimer composed of small subunits (RfcS) and large subunits (RfcL).

In terms of biological role, part of the RFC clamp loader complex which loads the PCNA sliding clamp onto DNA. In Thermoplasma volcanium (strain ATCC 51530 / DSM 4299 / JCM 9571 / NBRC 15438 / GSS1), this protein is Replication factor C large subunit.